A 390-amino-acid chain; its full sequence is NADH-quinone oxidoreductase subunit D (390 aa).

The protein belongs to the complex I 49 kDa subunit family. NDH-1 is composed of 14 different subunits. Subunits NuoB, C, D, E, F, and G constitute the peripheral sector of the complex.

It is found in the cell membrane. It carries out the reaction a quinone + NADH + 5 H(+)(in) = a quinol + NAD(+) + 4 H(+)(out). Functionally, NDH-1 shuttles electrons from NADH, via FMN and iron-sulfur (Fe-S) centers, to quinones in the respiratory chain. The immediate electron acceptor for the enzyme in this species is believed to be ubiquinone. Couples the redox reaction to proton translocation (for every two electrons transferred, four hydrogen ions are translocated across the cytoplasmic membrane), and thus conserves the redox energy in a proton gradient. The sequence is that of NADH-quinone oxidoreductase subunit D from Wolbachia sp. subsp. Brugia malayi (strain TRS).